We begin with the raw amino-acid sequence, 258 residues long: 6-carboxyhexanoate--CoA ligase (258 aa).

It belongs to the BioW family. In terms of assembly, homodimer. Requires Mg(2+) as cofactor.

It catalyses the reaction heptanedioate + ATP + CoA = 6-carboxyhexanoyl-CoA + AMP + diphosphate. The protein operates within metabolic intermediate metabolism; pimeloyl-CoA biosynthesis; pimeloyl-CoA from pimelate: step 1/1. Its function is as follows. Catalyzes the transformation of pimelate into pimeloyl-CoA with concomitant hydrolysis of ATP to AMP. The polypeptide is 6-carboxyhexanoate--CoA ligase (Bacillus spizizenii (strain ATCC 23059 / NRRL B-14472 / W23) (Bacillus subtilis subsp. spizizenii)).